A 704-amino-acid chain; its full sequence is MSLAQDINRVVAPFEVISEFKPAGDQPAAIADLTERINNGEKDVVLLGATGTGKSATTAWLIEQVQRPTLVMVQNKTLAAQLANEFRELLPNNAVEYFVSYYDYYQPEAYVAQTDTFIEKDSSINEEVERLRHSATNALLTRRDVVVVATVSCIYGLGTPEEYIAGMVTLRKGAEMNRDDLLRKFVSMQYARNDMDFHRGTFRVRGDTVEIIPMYEELAIRIEFFGDEIENIQTLHPLTGQIIQDEEEMYVFPASHYVAGPERMSRAIKRIEDELAERLQVLESQNKLVEAQRLRMRTTYDLEMMQQMGFCNGIENYSSHIDGRARGTAPHCLLDYFPDDFLLVIDESHVTVPQIGAMYEGDMSRKRNLVDFGFRLPSAMDNRPLKWDEFLERVGQTVYLSATPGKYELGKADGFVQQIIRPTGLIDPEVVVKPTKGQIDDLLGEIRTRTERNERVLVTTLTKRMAEDLTDYLLGHGVKVEYLHSDVDTLRRVELLRELRMGTFDVLVGINLLREGLDLPEVSLVSILDADKEGFLRSSTSLIQTIGRAARNVSGQVHMYADRITDSMAQAIDETNRRRAIQVAYNTEHGIDPQPLRKKIADITDQLAKEDADTDALLGSFDYGKGKRGITGANKPGAKKAAAQVRADGLAAAPAEDLVGMIAQLTEQMHGAAAELQFEVAARIRDEVSELKKELRQMQAAGHA.

Positions 35–188 (ERINNGEKDV…DDLLRKFVSM (154 aa)) constitute a Helicase ATP-binding domain. 48–55 (GATGTGKS) lines the ATP pocket. A Beta-hairpin motif is present at residues 101–124 (YYDYYQPEAYVAQTDTFIEKDSSI). The region spanning 438–604 (QIDDLLGEIR…PLRKKIADIT (167 aa)) is the Helicase C-terminal domain. The UVR domain maps to 659–694 (VGMIAQLTEQMHGAAAELQFEVAARIRDEVSELKKE).

The protein belongs to the UvrB family. In terms of assembly, forms a heterotetramer with UvrA during the search for lesions. Interacts with UvrC in an incision complex.

The protein resides in the cytoplasm. The UvrABC repair system catalyzes the recognition and processing of DNA lesions. A damage recognition complex composed of 2 UvrA and 2 UvrB subunits scans DNA for abnormalities. Upon binding of the UvrA(2)B(2) complex to a putative damaged site, the DNA wraps around one UvrB monomer. DNA wrap is dependent on ATP binding by UvrB and probably causes local melting of the DNA helix, facilitating insertion of UvrB beta-hairpin between the DNA strands. Then UvrB probes one DNA strand for the presence of a lesion. If a lesion is found the UvrA subunits dissociate and the UvrB-DNA preincision complex is formed. This complex is subsequently bound by UvrC and the second UvrB is released. If no lesion is found, the DNA wraps around the other UvrB subunit that will check the other stand for damage. This is UvrABC system protein B from Pseudarthrobacter chlorophenolicus (strain ATCC 700700 / DSM 12829 / CIP 107037 / JCM 12360 / KCTC 9906 / NCIMB 13794 / A6) (Arthrobacter chlorophenolicus).